The following is a 514-amino-acid chain: Variant surface glycoprotein ILTAT 1.24 (514 aa).

An N-terminal signal peptide occupies residues 1–23 (MVYRNILQLSVLKVLLIVLIVEA). 2 disulfides stabilise this stretch: Cys-37–Cys-162 and Cys-143–Cys-204. The N-linked (GlcNAc...) asparagine glycan is linked to Asn-443. The segment at 451–476 (GVPVTQTQTAGADTTAEKCKGKGEKD) is disordered. The segment covering 455 to 464 (TQTQTAGADT) has biased composition (low complexity). The segment covering 465-476 (TAEKCKGKGEKD) has biased composition (basic and acidic residues). Asp-491 is lipidated: GPI-anchor amidated aspartate. Positions 492-514 (SSILANKQFALSVASAAFVALLF) are cleaved as a propeptide — removed in mature form.

It localises to the cell membrane. Its function is as follows. VSG forms a coat on the surface of the parasite. The trypanosome evades the immune response of the host by expressing a series of antigenically distinct VSGs from an estimated 1000 VSG genes. This Trypanosoma brucei brucei protein is Variant surface glycoprotein ILTAT 1.24.